The sequence spans 199 residues: Alpha-D-glucose 1-phosphate phosphatase YihX (199 aa).

Asp-6 serves as the catalytic Nucleophile. Asp-6 contributes to the Mg(2+) binding site. Residues 6–8, 107–108, Lys-141, and Asp-166 contribute to the substrate site; these read DLG and SN. Asp-166 lines the Mg(2+) pocket.

This sequence belongs to the HAD-like hydrolase superfamily. YihX family. The cofactor is Mg(2+). Mn(2+) is required as a cofactor. Co(2+) serves as cofactor. Requires Zn(2+) as cofactor.

The enzyme catalyses alpha-D-glucose 1-phosphate + H2O = D-glucose + phosphate. In terms of biological role, catalyzes the dephosphorylation of alpha-D-glucose 1-phosphate (Glc1P) and, to a lesser extent, of other sugar phosphates. Has no activity with the beta form of Glc1P. In addition, YihX has significant phosphatase activity against pyridoxal phosphate (PLP) and low beta-phosphoglucomutase activity. The protein is Alpha-D-glucose 1-phosphate phosphatase YihX (yihX) of Escherichia coli (strain K12).